A 481-amino-acid polypeptide reads, in one-letter code: Glutamate--tRNA ligase (481 aa).

A 'HIGH' region motif is present at residues 28 to 38 (PSPTGFLHLGG). The span at 139 to 148 (RYDGTWRPEP) shows a compositional bias: basic and acidic residues. The interval 139-159 (RYDGTWRPEPGKTLPPVPADR) is disordered. The 'KMSKS' region signature appears at 260–264 (KLSKR). Lys-263 serves as a coordination point for ATP.

Belongs to the class-I aminoacyl-tRNA synthetase family. Glutamate--tRNA ligase type 1 subfamily. As to quaternary structure, monomer.

It localises to the cytoplasm. It carries out the reaction tRNA(Glu) + L-glutamate + ATP = L-glutamyl-tRNA(Glu) + AMP + diphosphate. Catalyzes the attachment of glutamate to tRNA(Glu) in a two-step reaction: glutamate is first activated by ATP to form Glu-AMP and then transferred to the acceptor end of tRNA(Glu). In Bordetella bronchiseptica (strain ATCC BAA-588 / NCTC 13252 / RB50) (Alcaligenes bronchisepticus), this protein is Glutamate--tRNA ligase.